The primary structure comprises 877 residues: Phosphoenolpyruvate carboxylase (877 aa).

Catalysis depends on residues His-138 and Lys-543.

The protein belongs to the PEPCase type 1 family. It depends on Mg(2+) as a cofactor.

The enzyme catalyses oxaloacetate + phosphate = phosphoenolpyruvate + hydrogencarbonate. Functionally, forms oxaloacetate, a four-carbon dicarboxylic acid source for the tricarboxylic acid cycle. This chain is Phosphoenolpyruvate carboxylase, found in Aeromonas salmonicida (strain A449).